The chain runs to 454 residues: Bifunctional protein GlmU (454 aa).

The segment at 1 to 227 is pyrophosphorylase; the sequence is MTQLSVVILA…FMEVEGANNR (227 aa). Residues 9-12, lysine 23, glutamine 74, 79-80, 101-103, glycine 138, glutamate 152, asparagine 167, and asparagine 225 contribute to the UDP-N-acetyl-alpha-D-glucosamine site; these read LAAG, GT, and YGD. Aspartate 103 contributes to the Mg(2+) binding site. Asparagine 225 contributes to the Mg(2+) binding site. Residues 228–248 are linker; sequence LQLAALERFYQKTQAEKLLLA. Positions 249 to 454 are N-acetyltransferase; sequence GVRLIDQARF…QGWQRPTKKK (206 aa). Residues arginine 331 and lysine 349 each coordinate UDP-N-acetyl-alpha-D-glucosamine. The active-site Proton acceptor is the histidine 361. Residues tyrosine 364 and asparagine 375 each coordinate UDP-N-acetyl-alpha-D-glucosamine. Acetyl-CoA is bound by residues alanine 378, 384 to 385, serine 403, alanine 421, and arginine 438; that span reads NY.

This sequence in the N-terminal section; belongs to the N-acetylglucosamine-1-phosphate uridyltransferase family. In the C-terminal section; belongs to the transferase hexapeptide repeat family. In terms of assembly, homotrimer. It depends on Mg(2+) as a cofactor.

The protein resides in the cytoplasm. It catalyses the reaction alpha-D-glucosamine 1-phosphate + acetyl-CoA = N-acetyl-alpha-D-glucosamine 1-phosphate + CoA + H(+). The catalysed reaction is N-acetyl-alpha-D-glucosamine 1-phosphate + UTP + H(+) = UDP-N-acetyl-alpha-D-glucosamine + diphosphate. It functions in the pathway nucleotide-sugar biosynthesis; UDP-N-acetyl-alpha-D-glucosamine biosynthesis; N-acetyl-alpha-D-glucosamine 1-phosphate from alpha-D-glucosamine 6-phosphate (route II): step 2/2. It participates in nucleotide-sugar biosynthesis; UDP-N-acetyl-alpha-D-glucosamine biosynthesis; UDP-N-acetyl-alpha-D-glucosamine from N-acetyl-alpha-D-glucosamine 1-phosphate: step 1/1. Its pathway is bacterial outer membrane biogenesis; LPS lipid A biosynthesis. Its function is as follows. Catalyzes the last two sequential reactions in the de novo biosynthetic pathway for UDP-N-acetylglucosamine (UDP-GlcNAc). The C-terminal domain catalyzes the transfer of acetyl group from acetyl coenzyme A to glucosamine-1-phosphate (GlcN-1-P) to produce N-acetylglucosamine-1-phosphate (GlcNAc-1-P), which is converted into UDP-GlcNAc by the transfer of uridine 5-monophosphate (from uridine 5-triphosphate), a reaction catalyzed by the N-terminal domain. In Actinobacillus pleuropneumoniae serotype 7 (strain AP76), this protein is Bifunctional protein GlmU.